We begin with the raw amino-acid sequence, 292 residues long: Putative peptidyl-prolyl cis-trans isomerase NifM (292 aa).

The region spanning 148 to 243 (HILVTINEDF…IGFHVLYCES (96 aa)) is the PpiC domain.

The protein belongs to the PpiC/parvulin rotamase family.

It carries out the reaction [protein]-peptidylproline (omega=180) = [protein]-peptidylproline (omega=0). Required for the activation and stabilization of the iron-component (NifH) of nitrogenase. Probable PPIase. This chain is Putative peptidyl-prolyl cis-trans isomerase NifM (nifM), found in Azotobacter vinelandii.